Consider the following 205-residue polypeptide: Imidazole glycerol phosphate synthase subunit HisH (205 aa).

The Glutamine amidotransferase type-1 domain occupies 1 to 205 (MIALVDYGGG…FFKMALGDKK (205 aa)). The active-site Nucleophile is C79. Catalysis depends on residues H181 and E183.

As to quaternary structure, heterodimer of HisH and HisF.

The protein resides in the cytoplasm. The enzyme catalyses 5-[(5-phospho-1-deoxy-D-ribulos-1-ylimino)methylamino]-1-(5-phospho-beta-D-ribosyl)imidazole-4-carboxamide + L-glutamine = D-erythro-1-(imidazol-4-yl)glycerol 3-phosphate + 5-amino-1-(5-phospho-beta-D-ribosyl)imidazole-4-carboxamide + L-glutamate + H(+). The catalysed reaction is L-glutamine + H2O = L-glutamate + NH4(+). Its pathway is amino-acid biosynthesis; L-histidine biosynthesis; L-histidine from 5-phospho-alpha-D-ribose 1-diphosphate: step 5/9. Functionally, IGPS catalyzes the conversion of PRFAR and glutamine to IGP, AICAR and glutamate. The HisH subunit catalyzes the hydrolysis of glutamine to glutamate and ammonia as part of the synthesis of IGP and AICAR. The resulting ammonia molecule is channeled to the active site of HisF. In Dehalococcoides mccartyi (strain CBDB1), this protein is Imidazole glycerol phosphate synthase subunit HisH.